Consider the following 457-residue polypeptide: F-box only protein 13 (457 aa).

Residues 64 to 110 (EFPMDDLNDDVLERVLSWLPTSCFFRMSSVCKRWKSSQTSKSFKLAC) enclose the F-box domain.

This is F-box only protein 13 (FBX13) from Arabidopsis thaliana (Mouse-ear cress).